The following is an 84-amino-acid chain: Beta-defensin 119 (84 aa).

Positions 1 to 21 (MKLLYLFLAILLAIEEPVISG) are cleaved as a signal peptide. Disulfide bonds link Cys28-Cys55, Cys35-Cys49, and Cys39-Cys56.

This sequence belongs to the beta-defensin family. In terms of tissue distribution, abundant expression in the male reproductive tract only. Abundant expressed in testis and the caput region of epididymis, but low in the corpus region.

The protein resides in the secreted. Has antibacterial activity. In Homo sapiens (Human), this protein is Beta-defensin 119 (DEFB119).